Consider the following 98-residue polypeptide: uncharacterized protein (98 aa).

Belongs to the HHV-5 UL19 protein family.

This is an uncharacterized protein from Human cytomegalovirus (strain AD169) (HHV-5).